Here is a 117-residue protein sequence, read N- to C-terminus: UPF0122 protein Teth39_1278 (117 aa).

It belongs to the UPF0122 family.

Might take part in the signal recognition particle (SRP) pathway. This is inferred from the conservation of its genetic proximity to ftsY/ffh. May be a regulatory protein. The protein is UPF0122 protein Teth39_1278 of Thermoanaerobacter pseudethanolicus (strain ATCC 33223 / 39E) (Clostridium thermohydrosulfuricum).